Consider the following 83-residue polypeptide: Mu-theraphotoxin-Hhn2o (83 aa).

Positions 1–21 (MKASMFLALAGLVLLFVVGYA) are cleaved as a signal peptide. Residues 22 to 48 (SESEEKEFPIELLSKIFAVDVFKGEER) constitute a propeptide that is removed on maturation. 3 disulfide bridges follow: Cys50/Cys65, Cys57/Cys70, and Cys64/Cys77. Residue Leu81 is modified to Leucine amide.

This sequence belongs to the neurotoxin 10 (Hwtx-1) family. 15 (Hntx-3) subfamily. Monomer. Expressed by the venom gland.

Its subcellular location is the secreted. Its function is as follows. Lethal neurotoxin. Selectively blocks tetrodotoxin-sensitive voltage-gated sodium channels (Nav). Does not affect tetrodotoxin-resistant voltage-gated sodium channels or calcium channels. This is Mu-theraphotoxin-Hhn2o from Cyriopagopus hainanus (Chinese bird spider).